The primary structure comprises 94 residues: MFTINAEVRKEQGKGASRRLRAANKFPAIIYGGEAAPVAIELDHDKLWNMQDKAEFYGEVVTLVIDGKEEKVKVQAVQRHAFKPKLTHIDFVRA.

It belongs to the bacterial ribosomal protein bL25 family. In terms of assembly, part of the 50S ribosomal subunit; part of the 5S rRNA/L5/L18/L25 subcomplex. Contacts the 5S rRNA. Binds to the 5S rRNA independently of L5 and L18.

In terms of biological role, this is one of the proteins that binds to the 5S RNA in the ribosome where it forms part of the central protuberance. This chain is Large ribosomal subunit protein bL25, found in Klebsiella pneumoniae (strain 342).